The chain runs to 290 residues: MEELHAEHQYLSQVKHILNCGNFKHDRTGVGTLSVFGMQSRYSLEKDFPLLTTKRVFWRGVVEELLWFIRGSTDSKELAASGVHIWDANGSRSYLDKLGLFDREEGDLGPVYGFQWRHFGAEYQGLKHNYGGEGVDQLKQIINTIHTNPTDRRMLMCAWNVLDVPKMALPPCHVLSQFYVCDGKLSCQLYQRSADMGLGVPFNIASYSLLTCMIAHVTDLVPGEFIHTLGDAHVYVNHVDALTEQLTRTPRPFPTLKFARKVASIDDFKANDIILENYNPYPSIKMPMAV.

Residues arginine 27 and 152–153 contribute to the dUMP site; that span reads RR. Cysteine 172 functions as the Nucleophile in the catalytic mechanism. Residues 192–195, asparagine 203, and 233–235 each bind dUMP; these read RSAD and HVY. (6R)-5,10-methylene-5,6,7,8-tetrahydrofolate is bound at residue aspartate 195. Alanine 289 serves as a coordination point for (6R)-5,10-methylene-5,6,7,8-tetrahydrofolate.

It belongs to the thymidylate synthase family. As to quaternary structure, homodimer.

It carries out the reaction dUMP + (6R)-5,10-methylene-5,6,7,8-tetrahydrofolate = 7,8-dihydrofolate + dTMP. Its pathway is pyrimidine metabolism; dTTP biosynthesis. The sequence is that of Thymidylate synthase (TS) from Ateles.